Reading from the N-terminus, the 128-residue chain is Ribonuclease P protein component (128 aa).

It belongs to the RnpA family. Consists of a catalytic RNA component (M1 or rnpB) and a protein subunit.

It catalyses the reaction Endonucleolytic cleavage of RNA, removing 5'-extranucleotides from tRNA precursor.. In terms of biological role, RNaseP catalyzes the removal of the 5'-leader sequence from pre-tRNA to produce the mature 5'-terminus. It can also cleave other RNA substrates such as 4.5S RNA. The protein component plays an auxiliary but essential role in vivo by binding to the 5'-leader sequence and broadening the substrate specificity of the ribozyme. In Prochlorococcus marinus (strain MIT 9303), this protein is Ribonuclease P protein component.